Here is a 231-residue protein sequence, read N- to C-terminus: Orotidine 5'-phosphate decarboxylase (231 aa).

Substrate-binding positions include Asp-11, Lys-33, 60–69, Thr-119, Arg-181, Gln-190, Gly-210, and Arg-211; that span reads DLKLHDIPNT. The Proton donor role is filled by Lys-62.

This sequence belongs to the OMP decarboxylase family. Type 1 subfamily. Homodimer.

It carries out the reaction orotidine 5'-phosphate + H(+) = UMP + CO2. It participates in pyrimidine metabolism; UMP biosynthesis via de novo pathway; UMP from orotate: step 2/2. Catalyzes the decarboxylation of orotidine 5'-monophosphate (OMP) to uridine 5'-monophosphate (UMP). The sequence is that of Orotidine 5'-phosphate decarboxylase from Malacoplasma penetrans (strain HF-2) (Mycoplasma penetrans).